The chain runs to 188 residues: Elongation factor P (188 aa).

Belongs to the elongation factor P family.

The protein localises to the cytoplasm. It functions in the pathway protein biosynthesis; polypeptide chain elongation. Involved in peptide bond synthesis. Stimulates efficient translation and peptide-bond synthesis on native or reconstituted 70S ribosomes in vitro. Probably functions indirectly by altering the affinity of the ribosome for aminoacyl-tRNA, thus increasing their reactivity as acceptors for peptidyl transferase. The polypeptide is Elongation factor P (Christiangramia forsetii (strain DSM 17595 / CGMCC 1.15422 / KT0803) (Gramella forsetii)).